We begin with the raw amino-acid sequence, 136 residues long: Holo-[acyl-carrier-protein] synthase (136 aa).

2 residues coordinate Mg(2+): Asp-7 and Glu-53.

This sequence belongs to the P-Pant transferase superfamily. AcpS family. Mg(2+) serves as cofactor.

The protein resides in the cytoplasm. It carries out the reaction apo-[ACP] + CoA = holo-[ACP] + adenosine 3',5'-bisphosphate + H(+). Transfers the 4'-phosphopantetheine moiety from coenzyme A to a Ser of acyl-carrier-protein. The chain is Holo-[acyl-carrier-protein] synthase from Roseiflexus castenholzii (strain DSM 13941 / HLO8).